Consider the following 118-residue polypeptide: MRANVLKRKLTLRIKRKKRIRAKISGCENFPRISVFKSNRTLYIQAIDDVKAVTLAAVDGRKLGVKANKEGAKKIAAEFAKTLKAKKIEQAVFDRNGYVYHGVIAALAESLRENGIRL.

This sequence belongs to the universal ribosomal protein uL18 family. In terms of assembly, part of the 50S ribosomal subunit; part of the 5S rRNA/L5/L18/L25 subcomplex. Contacts the 5S and 23S rRNAs.

Its function is as follows. This is one of the proteins that bind and probably mediate the attachment of the 5S RNA into the large ribosomal subunit, where it forms part of the central protuberance. The polypeptide is Large ribosomal subunit protein uL18 (Campylobacter jejuni subsp. jejuni serotype O:6 (strain 81116 / NCTC 11828)).